A 197-amino-acid polypeptide reads, in one-letter code: MHEEITGIILAGGRATRMGGEDKGLIQIAGIPLYQYVLSRLRPQVSLMAISANRNQARYGESGLPIVSDLTPDFSGPLAGMLAGLKHAATEWVVFVPCDVPDFPATLVDQLWQQKGSSLAAYASDGERAHPTLALLHTSLAPQLKEYLARGERKLMLFLDAAGARKIAFSGQQAAFHNLNTREDCLRWQQEKGLTNE.

GTP-binding positions include 10–12, K23, D69, and D99; that span reads LAG. D99 lines the Mg(2+) pocket.

Belongs to the MobA family. In terms of assembly, monomer. Requires Mg(2+) as cofactor.

The protein resides in the cytoplasm. It catalyses the reaction Mo-molybdopterin + GTP + H(+) = Mo-molybdopterin guanine dinucleotide + diphosphate. In terms of biological role, transfers a GMP moiety from GTP to Mo-molybdopterin (Mo-MPT) cofactor (Moco or molybdenum cofactor) to form Mo-molybdopterin guanine dinucleotide (Mo-MGD) cofactor. The polypeptide is Molybdenum cofactor guanylyltransferase (Serratia proteamaculans (strain 568)).